The chain runs to 595 residues: Aspartate--tRNA(Asp/Asn) ligase (595 aa).

Position 174 (Glu-174) interacts with L-aspartate. The aspartate stretch occupies residues 198–201 (QLFK). Arg-220 provides a ligand contact to L-aspartate. ATP-binding positions include 220-222 (RDE) and Gln-229. His-452 serves as a coordination point for L-aspartate. Residue Glu-486 coordinates ATP. Arg-493 contacts L-aspartate. 538-541 (GLDR) contacts ATP.

This sequence belongs to the class-II aminoacyl-tRNA synthetase family. Type 1 subfamily. In terms of assembly, homodimer.

It is found in the cytoplasm. The enzyme catalyses tRNA(Asx) + L-aspartate + ATP = L-aspartyl-tRNA(Asx) + AMP + diphosphate. In terms of biological role, aspartyl-tRNA synthetase with relaxed tRNA specificity since it is able to aspartylate not only its cognate tRNA(Asp) but also tRNA(Asn). Reaction proceeds in two steps: L-aspartate is first activated by ATP to form Asp-AMP and then transferred to the acceptor end of tRNA(Asp/Asn). The sequence is that of Aspartate--tRNA(Asp/Asn) ligase from Nitrosococcus oceani (strain ATCC 19707 / BCRC 17464 / JCM 30415 / NCIMB 11848 / C-107).